Here is a 209-residue protein sequence, read N- to C-terminus: SelT-like protein (209 aa).

The first 22 residues, 1–22, serve as a signal peptide directing secretion; that stretch reads MDKTQLILLGLPIFLLCSDLFN. A disulfide bond links Cys-64 and Cys-67.

Belongs to the SelWTH family. SELT subfamily.

This is SelT-like protein from Arabidopsis thaliana (Mouse-ear cress).